The following is a 163-amino-acid chain: Probable ribosome biogenesis protein RLP24 (163 aa).

Belongs to the eukaryotic ribosomal protein eL24 family. Associated with nucleolar and cytoplasmic pre-60S particles. At the end of biogenesis it dissociates from cytoplasmic pre-60S particles and is likely to be exchanged for its ribosomal homolog, RPL24.

Its subcellular location is the nucleus. The protein resides in the nucleolus. Functionally, involved in the biogenesis of the 60S ribosomal subunit. Ensures the docking of GTPBP4/NOG1 to pre-60S particles. The sequence is that of Probable ribosome biogenesis protein RLP24 (Rsl24d1) from Mus musculus (Mouse).